The following is a 213-amino-acid chain: Thiamine-phosphate synthase (213 aa).

4-amino-2-methyl-5-(diphosphooxymethyl)pyrimidine-binding positions include 40 to 44 (QFREK) and asparagine 75. Aspartate 76 and aspartate 95 together coordinate Mg(2+). Serine 113 is a binding site for 4-amino-2-methyl-5-(diphosphooxymethyl)pyrimidine. 139–141 (TPS) provides a ligand contact to 2-[(2R,5Z)-2-carboxy-4-methylthiazol-5(2H)-ylidene]ethyl phosphate. Residue lysine 142 participates in 4-amino-2-methyl-5-(diphosphooxymethyl)pyrimidine binding. 2-[(2R,5Z)-2-carboxy-4-methylthiazol-5(2H)-ylidene]ethyl phosphate contacts are provided by residues glycine 171 and 191–192 (IS).

Belongs to the thiamine-phosphate synthase family. Mg(2+) is required as a cofactor.

The enzyme catalyses 2-[(2R,5Z)-2-carboxy-4-methylthiazol-5(2H)-ylidene]ethyl phosphate + 4-amino-2-methyl-5-(diphosphooxymethyl)pyrimidine + 2 H(+) = thiamine phosphate + CO2 + diphosphate. It carries out the reaction 2-(2-carboxy-4-methylthiazol-5-yl)ethyl phosphate + 4-amino-2-methyl-5-(diphosphooxymethyl)pyrimidine + 2 H(+) = thiamine phosphate + CO2 + diphosphate. The catalysed reaction is 4-methyl-5-(2-phosphooxyethyl)-thiazole + 4-amino-2-methyl-5-(diphosphooxymethyl)pyrimidine + H(+) = thiamine phosphate + diphosphate. Its pathway is cofactor biosynthesis; thiamine diphosphate biosynthesis; thiamine phosphate from 4-amino-2-methyl-5-diphosphomethylpyrimidine and 4-methyl-5-(2-phosphoethyl)-thiazole: step 1/1. Condenses 4-methyl-5-(beta-hydroxyethyl)thiazole monophosphate (THZ-P) and 2-methyl-4-amino-5-hydroxymethyl pyrimidine pyrophosphate (HMP-PP) to form thiamine monophosphate (TMP). The polypeptide is Thiamine-phosphate synthase (Staphylococcus aureus (strain JH1)).